The following is a 489-amino-acid chain: UDP-N-acetylmuramoyl-L-alanyl-D-glutamate--2,6-diaminopimelate ligase (489 aa).

S30 is a UDP-N-acetyl-alpha-D-muramoyl-L-alanyl-D-glutamate binding site. Residue 110-116 coordinates ATP; the sequence is GTNGKTT. UDP-N-acetyl-alpha-D-muramoyl-L-alanyl-D-glutamate is bound by residues 152-153, S179, and R187; that span reads TT. K219 bears the N6-carboxylysine mark. Meso-2,6-diaminopimelate contacts are provided by residues R381, 405–408, G458, and E462; that span reads DNPR. Residues 405-408 carry the Meso-diaminopimelate recognition motif motif; the sequence is DNPR.

The protein belongs to the MurCDEF family. MurE subfamily. The cofactor is Mg(2+). Carboxylation is probably crucial for Mg(2+) binding and, consequently, for the gamma-phosphate positioning of ATP.

The protein resides in the cytoplasm. The enzyme catalyses UDP-N-acetyl-alpha-D-muramoyl-L-alanyl-D-glutamate + meso-2,6-diaminopimelate + ATP = UDP-N-acetyl-alpha-D-muramoyl-L-alanyl-gamma-D-glutamyl-meso-2,6-diaminopimelate + ADP + phosphate + H(+). It participates in cell wall biogenesis; peptidoglycan biosynthesis. Functionally, catalyzes the addition of meso-diaminopimelic acid to the nucleotide precursor UDP-N-acetylmuramoyl-L-alanyl-D-glutamate (UMAG) in the biosynthesis of bacterial cell-wall peptidoglycan. This chain is UDP-N-acetylmuramoyl-L-alanyl-D-glutamate--2,6-diaminopimelate ligase, found in Syntrophomonas wolfei subsp. wolfei (strain DSM 2245B / Goettingen).